Consider the following 530-residue polypeptide: MHWADVIAEKLIEERKADKYIVASGITPSGHIHVGNARETLTADAIYKGLINKGVEAELIFIADTYDPLRKLYPFLPKEFEQYIGMPLSEIPCPEGCCESYAEHFLRPYLESLDDLGVELTTYRADENYKKGLYDEKIKIALDNREKIMEILNKFRANPLPDDWWPINIVCENCGKLKTKVIKYDSEKEEITYRCEICGFENTVKPYKGRAKLPWRVDWPARWSIFNVTIEPMGKDHAAAGGSYDTGVLIAKEIYNYIPPKKVVYEWIQLKVGDKAIPMSSSKGVVFAVKDWTNIAHPEILRFLLLRSKPTKHIDFDLKKIPDLVDEYDRLEDFYFNNKDKDELSEEEQEKIRIYELSTPKIPETKPFVIPYRFCSIIAQLTYDEEKEDINMERVFEILRRNNYSIDDIDEFSMKKLKDRLLMARNWALKYGEKLVIISEDEAKEIYEKLKDKQKEWIKYFAEKLKTAEFDALNLHELIYQTAKELGLNPRDAFQASYMILLGKKYGPKLGAFLATLGKDFVIRRYSLFE.

Positions 28–36 match the 'HIGH' region motif; the sequence is PSGHIHVGN. Positions 278 to 282 match the 'KMSKS' region motif; that stretch reads PMSSS.

The protein belongs to the class-I aminoacyl-tRNA synthetase family.

The protein localises to the cytoplasm. The enzyme catalyses tRNA(Lys) + L-lysine + ATP = L-lysyl-tRNA(Lys) + AMP + diphosphate. In Methanocaldococcus jannaschii (strain ATCC 43067 / DSM 2661 / JAL-1 / JCM 10045 / NBRC 100440) (Methanococcus jannaschii), this protein is Lysine--tRNA ligase (lysS).